A 478-amino-acid polypeptide reads, in one-letter code: ATP synthase subunit beta (478 aa).

158–165 contributes to the ATP binding site; sequence GGAGVGKT.

This sequence belongs to the ATPase alpha/beta chains family. As to quaternary structure, F-type ATPases have 2 components, CF(1) - the catalytic core - and CF(0) - the membrane proton channel. CF(1) has five subunits: alpha(3), beta(3), gamma(1), delta(1), epsilon(1). CF(0) has three main subunits: a(1), b(2) and c(9-12). The alpha and beta chains form an alternating ring which encloses part of the gamma chain. CF(1) is attached to CF(0) by a central stalk formed by the gamma and epsilon chains, while a peripheral stalk is formed by the delta and b chains.

Its subcellular location is the cell inner membrane. It catalyses the reaction ATP + H2O + 4 H(+)(in) = ADP + phosphate + 5 H(+)(out). Produces ATP from ADP in the presence of a proton gradient across the membrane. The catalytic sites are hosted primarily by the beta subunits. The polypeptide is ATP synthase subunit beta (Rhizobium leguminosarum bv. trifolii (strain WSM2304)).